Reading from the N-terminus, the 2040-residue chain is Apolipoprotein(a) (2040 aa).

The first 19 residues, 1 to 19 (MEHKEVVLLLLLFLKSAAP), serve as a signal peptide directing secretion. 10 consecutive Kringle domains span residues 27–105 (DCYH…LTQC), 141–219 (ECYH…LTQC), 255–333 (ECYH…LTQC), 369–447 (ECYH…LTQC), 483–561 (ECYH…LTQC), 597–675 (ECYH…LTQC), 711–789 (ECYH…LTQC), 825–903 (ECYH…LTQC), 939–1017 (ECYH…LTRC), and 1053–1131 (DCYY…LTQC). 30 disulfide bridges follow: Cys28–Cys105, Cys49–Cys88, Cys77–Cys100, Cys142–Cys219, Cys163–Cys202, Cys191–Cys214, Cys256–Cys333, Cys277–Cys316, Cys305–Cys328, Cys370–Cys447, Cys391–Cys430, Cys419–Cys442, Cys484–Cys561, Cys505–Cys544, Cys533–Cys556, Cys598–Cys675, Cys619–Cys658, Cys647–Cys670, Cys712–Cys789, Cys733–Cys772, Cys761–Cys784, Cys826–Cys903, Cys847–Cys886, Cys875–Cys898, Cys940–Cys1017, Cys961–Cys1000, Cys989–Cys1012, Cys1054–Cys1131, Cys1075–Cys1114, and Cys1103–Cys1126. The N-linked (GlcNAc...) asparagine glycan is linked to Asn61. N-linked (GlcNAc...) asparagine glycosylation occurs at Asn101. An N-linked (GlcNAc...) asparagine glycan is attached at Asn215. Asn329 carries N-linked (GlcNAc...) asparagine glycosylation. Asn443 is a glycosylation site (N-linked (GlcNAc...) asparagine). The N-linked (GlcNAc...) asparagine glycan is linked to Asn557. The N-linked (GlcNAc...) asparagine glycan is linked to Asn671. N-linked (GlcNAc...) asparagine glycosylation occurs at Asn785. An N-linked (GlcNAc...) asparagine glycan is attached at Asn899. The N-linked (GlcNAc...) asparagine glycan is linked to Asn1013. Asn1127 carries N-linked (GlcNAc...) asparagine glycosylation. The disordered stretch occupies residues 1147–1166 (DPSTEASSEEAPTEQSPGVQ). 2 Kringle domains span residues 1167–1245 (DCYH…LTQC) and 1273–1351 (DCYH…LTQC). Disulfide bonds link Cys1168/Cys1245, Cys1189/Cys1228, Cys1217/Cys1240, Cys1274/Cys1351, Cys1295/Cys1334, and Cys1323/Cys1346. Residue Asn1241 is glycosylated (N-linked (GlcNAc...) asparagine). N-linked (GlcNAc...) asparagine glycans are attached at residues Asn1347 and Asn1381. Residues 1365–1388 (VPVPSTELPSEEAPTENSTGVQDC) form a disordered region. The region spanning 1387–1465 (DCYRGDGQSY…RWEYCNLTRC (79 aa)) is the Kringle 13 domain. 3 disulfide bridges follow: Cys1388-Cys1465, Cys1409-Cys1448, and Cys1437-Cys1460. Residue Asn1461 is glycosylated (N-linked (GlcNAc...) asparagine). The tract at residues 1476-1497 (PTVAPVPSTEAPSEQAPPEKSP) is disordered. Kringle domains lie at 1501–1579 (DCYH…LTQC), 1615–1693 (QCYH…LTRC), and 1719–1799 (DCMF…IPLC). Cystine bridges form between Cys1502-Cys1579, Cys1523-Cys1562, Cys1551-Cys1574, Cys1616-Cys1693, Cys1637-Cys1676, Cys1665-Cys1688, Cys1720-Cys1799, Cys1741-Cys1782, Cys1770-Cys1794, and Cys1846-Cys1862. Asn1575 is a glycosylation site (N-linked (GlcNAc...) asparagine). N-linked (GlcNAc...) asparagine glycosylation is present at Asn1689. Residues 1820–2038 (IVGGCVAHPH…FVTWIEGMMR (219 aa)) form the Peptidase S1 domain. Residues His1861 and Asp1904 each act as charge relay system in the active site. Intrachain disulfides connect Cys1938-Cys1996, Cys1968-Cys1975, and Cys1986-Cys2014. The active-site Charge relay system is Ser1990.

The protein belongs to the peptidase S1 family. Plasminogen subfamily. As to quaternary structure, disulfide-linked to apo-B100. Binds to fibronectin and decorin. N- and O-glycosylated. The N-glycans are complex biantennary structures present in either a mono- or disialylated state. The O-glycans are mostly (80%) represented by the monosialylated core type I structure, NeuNAcalpha2-3Galbeta1-3GalNAc, with smaller amounts of disialylated and non-sialylated O-glycans also detected.

Apo(a) is the main constituent of lipoprotein(a) (Lp(a)). It has serine proteinase activity and is able of autoproteolysis. Inhibits tissue-type plasminogen activator 1. Lp(a) may be a ligand for megalin/Gp 330. The chain is Apolipoprotein(a) (LPA) from Homo sapiens (Human).